Here is a 213-residue protein sequence, read N- to C-terminus: Small ribosomal subunit protein uS3 (213 aa).

Positions 38 to 106 (IRAFVKKLLY…EFSLEVNEIR (69 aa)) constitute a KH type-2 domain.

The protein belongs to the universal ribosomal protein uS3 family. In terms of assembly, part of the 30S ribosomal subunit. Forms a tight complex with proteins S10 and S14.

Binds the lower part of the 30S subunit head. Binds mRNA in the 70S ribosome, positioning it for translation. This chain is Small ribosomal subunit protein uS3, found in Desulfovibrio desulfuricans (strain ATCC 27774 / DSM 6949 / MB).